A 217-amino-acid polypeptide reads, in one-letter code: Probable transaldolase (217 aa).

Residue Lys83 is the Schiff-base intermediate with substrate of the active site.

Belongs to the transaldolase family. Type 3B subfamily.

The protein localises to the cytoplasm. It catalyses the reaction D-sedoheptulose 7-phosphate + D-glyceraldehyde 3-phosphate = D-erythrose 4-phosphate + beta-D-fructose 6-phosphate. The protein operates within carbohydrate degradation; pentose phosphate pathway; D-glyceraldehyde 3-phosphate and beta-D-fructose 6-phosphate from D-ribose 5-phosphate and D-xylulose 5-phosphate (non-oxidative stage): step 2/3. In terms of biological role, transaldolase is important for the balance of metabolites in the pentose-phosphate pathway. The sequence is that of Probable transaldolase from Anaeromyxobacter sp. (strain K).